Consider the following 269-residue polypeptide: Flagellar brake protein YcgR (269 aa).

The interval 1–42 is disordered; it reads MLREPMNQHDAPGPAETGADSDAETDAETDAETDAGAADDRY. A compositionally biased stretch (acidic residues) spans 19–33; the sequence is ADSDAETDAETDAET. A PilZ domain is found at 149–261; the sequence is QRRRHFRART…MENFLQRLVF (113 aa).

The protein belongs to the YcgR family. As to quaternary structure, monomer. Interacts with the flagellar basal bodies.

Its subcellular location is the bacterial flagellum basal body. In terms of biological role, acts as a flagellar brake, regulating swimming and swarming in a bis-(3'-5') cyclic diguanylic acid (c-di-GMP)-dependent manner. Binds 1 c-di-GMP dimer per subunit. Increasing levels of c-di-GMP lead to decreased motility. This Cupriavidus taiwanensis (strain DSM 17343 / BCRC 17206 / CCUG 44338 / CIP 107171 / LMG 19424 / R1) (Ralstonia taiwanensis (strain LMG 19424)) protein is Flagellar brake protein YcgR.